We begin with the raw amino-acid sequence, 92 residues long: Small ribosomal subunit protein uS19 (92 aa).

It belongs to the universal ribosomal protein uS19 family.

Protein S19 forms a complex with S13 that binds strongly to the 16S ribosomal RNA. The sequence is that of Small ribosomal subunit protein uS19 from Chromobacterium violaceum (strain ATCC 12472 / DSM 30191 / JCM 1249 / CCUG 213 / NBRC 12614 / NCIMB 9131 / NCTC 9757 / MK).